The sequence spans 354 residues: Guanine nucleotide-binding protein alpha-2 subunit (354 aa).

A G-alpha domain is found at 33–354 (KIYKVLLLGA…QHSLKEAGMF (322 aa)). The tract at residues 36-49 (KVLLLGASDSGKST) is G1 motif. The GTP site is built by Asp44, Ser45, Gly46, Lys47, Ser48, Thr49, Asp148, Leu173, Thr179, Gly201, Asn269, Lys270, Asp272, and Ala326. Ser48 contacts Mg(2+). Residues 171–179 (DILRSRNST) are G2 motif. Thr179 contacts Mg(2+). The tract at residues 194–203 (IRMFDVGGQR) is G3 motif. Residues 265–272 (ILFLNKFD) are G4 motif. The tract at residues 324 to 329 (TTAVDT) is G5 motif.

The protein belongs to the G-alpha family. As to quaternary structure, g proteins are composed of 3 units; alpha, beta and gamma. Binding of the beta-gamma subunit complex (git5-git11) to the alpha subunit (gpa2) facilitates interaction with GPCR git3. Interacts with GPCR git3; the interaction is direct and leads to activation of gpa2 upon glucose stimulation. Interacts with adenylate cyclase cyr1 (via N-terminus); the interaction is direct and serves to activate adenylate cyclase and cAMP-PKA signaling, to repress sexual development and gluconeogenesis. The cofactor is Mg(2+).

The protein localises to the cell membrane. Functionally, alpha subunit of the heterotrimeric guanine nucleotide-binding protein (G protein) involved in glucose-induced cAMP signaling. Binds to its cognate transmembrane receptor git3, which senses extracellular glucose, and activates cAMP-PKA signaling to repress sexual development and gluconeogenesis. This is Guanine nucleotide-binding protein alpha-2 subunit from Schizosaccharomyces pombe (strain 972 / ATCC 24843) (Fission yeast).